The following is a 1200-amino-acid chain: SR-related and CTD-associated factor 4 (1200 aa).

A CID domain is found at 1–139 (MDAVNAFNQE…PLLDMAAGTS (139 aa)). N6-acetyllysine is present on Lys49. Over residues 140–153 (NAAPGAENVTNNEG) the composition is skewed to polar residues. 3 disordered regions span residues 140–172 (NAAPGAENVTNNEGSPPPPVKVSSELPQAPTNS), 299–324 (VPASSATSPPPPQAPFGYPGDGMQQP), and 346–566 (SMQH…QIKS). A Phosphoserine modification is found at Ser154. Composition is skewed to pro residues over residues 367 to 390 (APPPFPPMPQPGMPQPGMPQPGMP) and 399 to 461 (LPQP…PPVQ). The span at 462 to 471 (PTFQPTFQPQ) shows a compositional bias: low complexity. A compositionally biased stretch (basic and acidic residues) spans 493-503 (EVKRHVPESRK). Positions 504-541 (SRSRSPKRRRSRSGSRSRRSRHRRSRSRSRDRRRHSPR) are enriched in basic residues. A compositionally biased stretch (basic and acidic residues) spans 543–558 (RSQERRDREKERERRQ). The RRM domain maps to 574 to 648 (TTLWVGQLDK…KSIKIAWALN (75 aa)). Disordered stretches follow at residues 696-724 (WKGIPKKPENEVAQNGGAEASHTEPVSPI), 834-875 (VSGA…SLLG), and 927-1200 (PPHM…EAPR). Position 722 is a phosphoserine (Ser722). Composition is skewed to pro residues over residues 856-868 (PAAPTSLPTPPVT) and 927-958 (PPHMMHRGPPPGPGGFAMPPPHGMKGPFPPHG). A compositionally biased stretch (gly residues) spans 965–978 (GMPGLGGPGPGPGG). Over residues 986–1036 (QQQPQQQQQQQQQQQQQQQQQQQQPPPQQSQTQQQPAPSQQPAPAQQQPQQ) the composition is skewed to low complexity. A Phosphoserine modification is found at Ser1058. Residues 1063–1139 (VENDRERYGS…RGKEKHEVAD (77 aa)) are compositionally biased toward basic and acidic residues. The segment covering 1153-1162 (QVGNTDTVSE) has biased composition (polar residues). The residue at position 1178 (Ser1178) is a Phosphoserine.

In terms of assembly, interacts with POLR2A; via C-terminal heptapeptide repeat domain (CTD) phosphorylated at 'Ser-2' and 'Ser-5'.

The protein localises to the nucleus. Its function is as follows. Anti-terminator protein required to prevent early mRNA termination during transcription. Together with SCAF8, acts by suppressing the use of early, alternative poly(A) sites, thereby preventing the accumulation of non-functional truncated proteins. Mechanistically, associates with the phosphorylated C-terminal heptapeptide repeat domain (CTD) of the largest RNA polymerase II subunit (POLR2A), and subsequently binds nascent RNA upstream of early polyadenylation sites to prevent premature mRNA transcript cleavage and polyadenylation. Independently of SCAF8, also acts as a suppressor of transcriptional readthrough. This chain is SR-related and CTD-associated factor 4, found in Rattus norvegicus (Rat).